Reading from the N-terminus, the 300-residue chain is MEGVLYKWTNYLTGWQPRWFVLDNGILSYYDSQDDVCKGSKGSIKMAVCEIKVHSADNTRMELIIPGEQHFYMKAVNAAERQRWLVALGSSKACLTDTRTKKEKEISETSESLKTKMSELRLYCDLLMQQVHTIQEFVHHDENHSSPSAENMNEASSLLSATCNTFITTLEECVKIANAKFKPEMFQLHHPDPLVSPVSPSPVQMMKRSVSHPGSCSSERSSHSIKEPVSTLHRLSQRRRRTYSDTDSCSDIPLEDPDRPVHCSKNTLNGDLASATIPEESRLMAKKQSESEDTLPSFSS.

Positions 1–93 (MEGVLYKWTN…WLVALGSSKA (93 aa)) constitute a PH domain. The interaction with SACM1L stretch occupies residues 1 to 100 (MEGVLYKWTN…SKACLTDTRT (100 aa)). The tract at residues 97-300 (DTRTKKEKEI…SEDTLPSFSS (204 aa)) is interaction with VAPA and VAPB. The disordered stretch occupies residues 197 to 300 (PVSPSPVQMM…SEDTLPSFSS (104 aa)). A phosphoserine mark is found at serine 236 and serine 244. Basic and acidic residues predominate over residues 279–290 (EESRLMAKKQSE).

In terms of assembly, interacts with GTP-bound ARF1. Interacts with SACM1L and VAPA and/or VAPB to form a ternary complex. Widely expressed.

It is found in the golgi apparatus. It localises to the trans-Golgi network membrane. Its function is as follows. Plays a role in regulation of vesicular cargo transport from the trans-Golgi network (TGN) to the plasma membrane. Regulates Golgi phosphatidylinositol 4-phosphate (PtdIns(4)P) levels and activates the PtdIns(4)P phosphatase activity of SACM1L when it binds PtdIns(4)P in 'trans' configuration. Binds preferentially to PtdIns(4)P. Negatively regulates APOB secretion from hepatocytes. This is Pleckstrin homology domain-containing family A member 3 (PLEKHA3) from Homo sapiens (Human).